The following is a 502-amino-acid chain: Glutamate--tRNA ligase (502 aa).

Positions Pro-12–Gly-22 match the 'HIGH' region motif. A 'KMSKS' region motif is present at residues Lys-259–Arg-263. ATP is bound at residue Lys-262.

This sequence belongs to the class-I aminoacyl-tRNA synthetase family. Glutamate--tRNA ligase type 1 subfamily. Monomer.

It localises to the cytoplasm. It catalyses the reaction tRNA(Glu) + L-glutamate + ATP = L-glutamyl-tRNA(Glu) + AMP + diphosphate. Its function is as follows. Catalyzes the attachment of glutamate to tRNA(Glu) in a two-step reaction: glutamate is first activated by ATP to form Glu-AMP and then transferred to the acceptor end of tRNA(Glu). This Chlorobium chlorochromatii (strain CaD3) protein is Glutamate--tRNA ligase.